The following is a 448-amino-acid chain: Immunoglobulin G-binding protein G (448 aa).

The first 33 residues, 1 to 33 (MEKEKKVKYFLRKSAFGLASVSAAFLVGSTVFA), serve as a signal peptide directing secretion. Repeat copies occupy residues 104–140 (LAKA…IKDL), 179–215 (LAEA…VKEL), 228–282 (TYKL…TVTE), and 298–352 (TYKL…TVTE). Positions 104 to 215 (LAKAKADALK…AKTVEGVKEL (112 aa)) are 2 X 37 AA repeats. Positions 228-352 (TYKLILNGKT…DATKTFTVTE (125 aa)) are 2 X 55 AA repeats. The disordered stretch occupies residues 358–422 (PGDAPTEPEK…TLPTTGEGSN (65 aa)). Over residues 384–412 (AKDDAKKDDTKKEDAKKPEAKKDDAKKAE) the composition is skewed to basic and acidic residues. Residues 386–410 (DDAKKDDTKKEDAKKPEAKKDDAKK) are 5 X 5 AA repeats of [DE]-D-A-K-K. The LPXTG sorting signal motif lies at 414–418 (LPTTG). A Pentaglycyl murein peptidoglycan amidated threonine modification is found at threonine 417. A propeptide spans 418–448 (GEGSNPFFTAAALAVMAGAGALAVASKRKED) (removed by sortase).

It is found in the secreted. It localises to the cell wall. Functionally, binds to the constant Fc region of IgG with high affinity. In Streptococcus sp. group G, this protein is Immunoglobulin G-binding protein G (spg).